An 83-amino-acid polypeptide reads, in one-letter code: Hainantoxin-III 8 (83 aa).

The N-terminal stretch at 1–21 (MKASMFLALAGLVLLFVVGYA) is a signal peptide. The propeptide occupies 22–48 (SESEEKEFPRELLSKIFAVDDFTGEER). Intrachain disulfides connect Cys-50-Cys-65, Cys-57-Cys-70, and Cys-64-Cys-77. Position 81 is a leucine amide (Leu-81).

Belongs to the neurotoxin 10 (Hwtx-1) family. 15 (Hntx-3) subfamily. In terms of assembly, monomer. As to expression, expressed by the venom gland.

It is found in the secreted. Functionally, selective antagonist of neuronal tetrodotoxin (TTX)-sensitive voltage-gated sodium channels (IC(50)=1270 nM on Nav1.1/SCN1A, 270 nM on Nav1.2/SCN2A, 491 nM on Nav1.3/SCN3A and 232 nM on Nav1.7/SCN9A). This toxin suppress Nav1.7 current amplitude without significantly altering the activation, inactivation, and repriming kinetics. Short extreme depolarizations partially activate the toxin-bound channel, indicating voltage-dependent inhibition of this toxin. This toxin increases the deactivation of the Nav1.7 current after extreme depolarizations. The toxin-Nav1.7 complex is gradually dissociated upon prolonged strong depolarizations in a voltage-dependent manner, and the unbound toxin rebinds to Nav1.7 after a long repolarization. Moreover, analysis of chimeric channels showed that the DIIS3-S4 linker is critical for toxin binding to Nav1.7. These data are consistent with this toxin interacting with Nav1.7 site 4 and trapping the domain II voltage sensor in the closed state. The polypeptide is Hainantoxin-III 8 (Cyriopagopus hainanus (Chinese bird spider)).